The primary structure comprises 331 residues: GTPase Obg (331 aa).

Positions 1–159 (MQFIDQARIA…RELQLELKLL (159 aa)) constitute an Obg domain. One can recognise an OBG-type G domain in the interval 160–328 (AEVGLVGLPN…LLQQVWQELG (169 aa)). Residues 166-173 (GLPNAGKS), 191-195 (FTTLV), 213-216 (DIPG), 280-283 (SKSE), and 309-311 (SAV) contribute to the GTP site. Mg(2+) is bound by residues serine 173 and threonine 193.

The protein belongs to the TRAFAC class OBG-HflX-like GTPase superfamily. OBG GTPase family. As to quaternary structure, monomer. Requires Mg(2+) as cofactor.

It is found in the cytoplasm. Functionally, an essential GTPase which binds GTP, GDP and possibly (p)ppGpp with moderate affinity, with high nucleotide exchange rates and a fairly low GTP hydrolysis rate. Plays a role in control of the cell cycle, stress response, ribosome biogenesis and in those bacteria that undergo differentiation, in morphogenesis control. This Synechococcus sp. (strain RCC307) protein is GTPase Obg.